The sequence spans 482 residues: UDP-N-acetylmuramate--L-alanine ligase (482 aa).

123-129 is an ATP binding site; that stretch reads GTHGKTT.

The protein belongs to the MurCDEF family.

The protein resides in the cytoplasm. The catalysed reaction is UDP-N-acetyl-alpha-D-muramate + L-alanine + ATP = UDP-N-acetyl-alpha-D-muramoyl-L-alanine + ADP + phosphate + H(+). Its pathway is cell wall biogenesis; peptidoglycan biosynthesis. Its function is as follows. Cell wall formation. This chain is UDP-N-acetylmuramate--L-alanine ligase, found in Pseudomonas putida (strain GB-1).